We begin with the raw amino-acid sequence, 228 residues long: Ion-translocating oxidoreductase complex subunit E (228 aa).

Transmembrane regions (helical) follow at residues 18–38, 69–89, 92–112, 125–145, and 182–202; these read ALVQ…ATNA, IPIY…LINA, FGLY…CIVV, LLSA…MFVL, and PFLL…MLAV.

It belongs to the NqrDE/RnfAE family. In terms of assembly, the complex is composed of six subunits: RnfA, RnfB, RnfC, RnfD, RnfE and RnfG.

It localises to the cell inner membrane. In terms of biological role, part of a membrane-bound complex that couples electron transfer with translocation of ions across the membrane. The protein is Ion-translocating oxidoreductase complex subunit E of Cronobacter sakazakii (strain ATCC BAA-894) (Enterobacter sakazakii).